A 60-amino-acid chain; its full sequence is Large ribosomal subunit protein bL32 (60 aa).

Belongs to the bacterial ribosomal protein bL32 family.

This chain is Large ribosomal subunit protein bL32, found in Borrelia turicatae (strain 91E135).